Here is a 311-residue protein sequence, read N- to C-terminus: Aspartate carbamoyltransferase catalytic subunit (311 aa).

Carbamoyl phosphate contacts are provided by Arg55 and Thr56. Lys85 contributes to the L-aspartate binding site. Carbamoyl phosphate-binding residues include Arg106, His135, and Gln138. Residues Arg168 and Arg230 each contribute to the L-aspartate site. Residues Leu268 and Pro269 each coordinate carbamoyl phosphate.

Belongs to the aspartate/ornithine carbamoyltransferase superfamily. ATCase family. As to quaternary structure, heterododecamer (2C3:3R2) of six catalytic PyrB chains organized as two trimers (C3), and six regulatory PyrI chains organized as three dimers (R2).

The catalysed reaction is carbamoyl phosphate + L-aspartate = N-carbamoyl-L-aspartate + phosphate + H(+). It participates in pyrimidine metabolism; UMP biosynthesis via de novo pathway; (S)-dihydroorotate from bicarbonate: step 2/3. Catalyzes the condensation of carbamoyl phosphate and aspartate to form carbamoyl aspartate and inorganic phosphate, the committed step in the de novo pyrimidine nucleotide biosynthesis pathway. This Escherichia fergusonii (strain ATCC 35469 / DSM 13698 / CCUG 18766 / IAM 14443 / JCM 21226 / LMG 7866 / NBRC 102419 / NCTC 12128 / CDC 0568-73) protein is Aspartate carbamoyltransferase catalytic subunit.